A 208-amino-acid polypeptide reads, in one-letter code: Protein-L-isoaspartate O-methyltransferase (208 aa).

The active site involves S59.

It belongs to the methyltransferase superfamily. L-isoaspartyl/D-aspartyl protein methyltransferase family.

The protein resides in the cytoplasm. The enzyme catalyses [protein]-L-isoaspartate + S-adenosyl-L-methionine = [protein]-L-isoaspartate alpha-methyl ester + S-adenosyl-L-homocysteine. Catalyzes the methyl esterification of L-isoaspartyl residues in peptides and proteins that result from spontaneous decomposition of normal L-aspartyl and L-asparaginyl residues. It plays a role in the repair and/or degradation of damaged proteins. This chain is Protein-L-isoaspartate O-methyltransferase, found in Vibrio atlanticus (strain LGP32) (Vibrio splendidus (strain Mel32)).